Here is a 190-residue protein sequence, read N- to C-terminus: Peptide deformylase (190 aa).

Fe cation-binding residues include Cys-106 and His-148. Glu-149 is an active-site residue. His-152 lines the Fe cation pocket.

The protein belongs to the polypeptide deformylase family. Fe(2+) serves as cofactor.

It carries out the reaction N-terminal N-formyl-L-methionyl-[peptide] + H2O = N-terminal L-methionyl-[peptide] + formate. Its function is as follows. Removes the formyl group from the N-terminal Met of newly synthesized proteins. Requires at least a dipeptide for an efficient rate of reaction. N-terminal L-methionine is a prerequisite for activity but the enzyme has broad specificity at other positions. The protein is Peptide deformylase of Methylacidiphilum infernorum (isolate V4) (Methylokorus infernorum (strain V4)).